The primary structure comprises 125 residues: Small ribosomal subunit protein uS12 (125 aa).

A 3-methylthioaspartic acid modification is found at D89.

It belongs to the universal ribosomal protein uS12 family. Part of the 30S ribosomal subunit. Contacts proteins S8 and S17. May interact with IF1 in the 30S initiation complex.

In terms of biological role, with S4 and S5 plays an important role in translational accuracy. Functionally, interacts with and stabilizes bases of the 16S rRNA that are involved in tRNA selection in the A site and with the mRNA backbone. Located at the interface of the 30S and 50S subunits, it traverses the body of the 30S subunit contacting proteins on the other side and probably holding the rRNA structure together. The combined cluster of proteins S8, S12 and S17 appears to hold together the shoulder and platform of the 30S subunit. The chain is Small ribosomal subunit protein uS12 from Clostridium botulinum (strain ATCC 19397 / Type A).